Reading from the N-terminus, the 163-residue chain is Photosystem II extrinsic protein V (163 aa).

The N-terminal stretch at 1-26 is a signal peptide; that stretch reads MFKKSYQFFALVLFSIFNVLVTSASA. Heme c is bound by residues C63, C66, H67, and H118.

It belongs to the cytochrome c family. PsbV subfamily. PSII is composed of 1 copy each of membrane proteins PsbA, PsbB, PsbC, PsbD, PsbE, PsbF, PsbH, PsbI, PsbJ, PsbK, PsbL, PsbM, PsbT, PsbY, PsbZ, Psb30/Ycf12, at least 3 peripheral proteins of the oxygen-evolving complex and a large number of cofactors. It forms dimeric complexes. The cofactor is heme c.

The protein resides in the plastid. Its subcellular location is the chloroplast thylakoid membrane. In terms of biological role, one of the extrinsic, lumenal subunits of photosystem II (PSII). PSII is a light-driven water plastoquinone oxidoreductase, using light energy to abstract electrons from H(2)O, generating a proton gradient subsequently used for ATP formation. The extrinsic proteins stabilize the structure of photosystem II oxygen-evolving complex (OEC), the ion environment of oxygen evolution and protect the OEC against heat-induced inactivation. This is Photosystem II extrinsic protein V from Trieres chinensis (Marine centric diatom).